A 155-amino-acid chain; its full sequence is MQVRIVSLAAQPLFVLRVQGPFAQSLGPGFERLMAWSARHGLRGQWMALYYDNPREVAPDALRADVALTTASVTLPSDGEAYGIRRGALAGGLYALAQVRVTDNDFATPWIALFDQALPACGYRPDGGPCFERYLSDGRGSGEWLLELGVPVRKN.

This sequence belongs to the DNA gyrase inhibitor family. In terms of assembly, interacts with DNA gyrase.

The protein resides in the cytoplasm. Inhibits the supercoiling activity of DNA gyrase. Acts by inhibiting DNA gyrase at an early step, prior to (or at the step of) binding of DNA by the gyrase. It protects cells against toxins that target DNA gyrase, by inhibiting activity of these toxins and reducing the formation of lethal double-strand breaks in the cell. The chain is DNA gyrase inhibitor from Edwardsiella ictaluri (strain 93-146).